A 206-amino-acid chain; its full sequence is MLSLFRIIIHVCCLGPVAWLAWVLLSGDESQLGADPIKEIQHFLGFSALTILLIMFILGKVFYLLKQPQLQVLRRALGLWAWFYVVLHVYAYLALELGYDFSLFVQELVNRGYLIIGAIAFLILTLMALSSWSYLKLKMGKWWFYLHQLGYYALLLGAIHYVWSVKNVTFSSMLYLILSIMILCDALYGLFIKRKGRSTSAHTGKD.

Transmembrane regions (helical) follow at residues 7–27, 43–63, 77–97, 112–132, 142–162, and 172–192; these read IIIH…LLSG, FLGF…KVFY, LGLW…ALEL, GYLI…LSSW, WWFY…IHYV, and SMLY…GLFI.

This sequence belongs to the MsrQ family. In terms of assembly, heterodimer of a catalytic subunit (MsrP) and a heme-binding subunit (MsrQ). FMN is required as a cofactor. The cofactor is heme b.

It is found in the cell inner membrane. Its function is as follows. Part of the MsrPQ system that repairs oxidized periplasmic proteins containing methionine sulfoxide residues (Met-O), using respiratory chain electrons. Thus protects these proteins from oxidative-stress damage caused by reactive species of oxygen and chlorine generated by the host defense mechanisms. MsrPQ is essential for the maintenance of envelope integrity under bleach stress, rescuing a wide series of structurally unrelated periplasmic proteins from methionine oxidation. MsrQ provides electrons for reduction to the reductase catalytic subunit MsrP, using the quinone pool of the respiratory chain. The polypeptide is Protein-methionine-sulfoxide reductase heme-binding subunit MsrQ (Pasteurella multocida (strain Pm70)).